A 194-amino-acid polypeptide reads, in one-letter code: Peptidyl-tRNA hydrolase (194 aa).

Tyr16 is a binding site for tRNA. His21 serves as the catalytic Proton acceptor. 3 residues coordinate tRNA: Phe67, Asn69, and Asn115.

This sequence belongs to the PTH family. In terms of assembly, monomer.

The protein resides in the cytoplasm. It carries out the reaction an N-acyl-L-alpha-aminoacyl-tRNA + H2O = an N-acyl-L-amino acid + a tRNA + H(+). Its function is as follows. Hydrolyzes ribosome-free peptidyl-tRNAs (with 1 or more amino acids incorporated), which drop off the ribosome during protein synthesis, or as a result of ribosome stalling. Functionally, catalyzes the release of premature peptidyl moieties from peptidyl-tRNA molecules trapped in stalled 50S ribosomal subunits, and thus maintains levels of free tRNAs and 50S ribosomes. In Colwellia psychrerythraea (strain 34H / ATCC BAA-681) (Vibrio psychroerythus), this protein is Peptidyl-tRNA hydrolase.